The primary structure comprises 677 residues: MVSMHREDAQRREAEELRREIERHNHLYYVEAKPEISDYDFDRLLLRLIELEREHPELVTPDSPTGRVGGAVTREFPPVEHREPMLSLSNTYSIGEVEEFSARVGRLLEAEGIRDRDMVAELKFDGVAVSLLYRDGVLVRGATRGNGRRGDDITVNLRTVPTVPLRLQTLDTPFSLGEGREVEVRGEVFMRKEDFTALNDTRPEEDRFANPRNATAGTLKLQDSAEVAVRRLWFVAYYLDGIQDPDTPHFHRLQLLETAGFFTGGHYRLCKGMQEIAAFIARWNEERWHLPYETDGVVLKLNDVRQWKTLGATSKSPRWAIAYKYPAQQATTVLRDVVFQVGRLGTITPVAELEPVRLAGSTVSRSTLHNFDEMRRLGIMIGDRVVIEKSGEVIPKVIRVVTEARPVDARLVELPSRCPACSTPIVREEGEVGFYCPNEAGCPAQLKGRILHFASRNAMDIQNLGEALVEQLVAFGLVHDPGDLYFLQEPQLRNLERMGPKSAQNVVRALDESRSQSYARLLFALGIRHVGQATARELARAFPSIEALEAASEEELADVADIGPVIARSIREWFEAPAVSALLEKLRDARLPLAAEDPKPLINSNFEGLSVVFTGALLRHDRQSASELVLERGGKIVSTVSKKTGLVVAGREAGSKLEKALKLGLRVISEEEFEAML.

NAD(+) contacts are provided by residues 38–42 (DYDFD), 87–88 (SL), and Glu121. Lys123 serves as the catalytic N6-AMP-lysine intermediate. NAD(+)-binding residues include Arg144, Glu187, Lys300, and Lys324. Cys418, Cys421, Cys436, and Cys442 together coordinate Zn(2+). Residues 601-677 (LINSNFEGLS…ISEEEFEAML (77 aa)) enclose the BRCT domain.

The protein belongs to the NAD-dependent DNA ligase family. LigA subfamily. It depends on Mg(2+) as a cofactor. Mn(2+) is required as a cofactor.

It catalyses the reaction NAD(+) + (deoxyribonucleotide)n-3'-hydroxyl + 5'-phospho-(deoxyribonucleotide)m = (deoxyribonucleotide)n+m + AMP + beta-nicotinamide D-nucleotide.. In terms of biological role, DNA ligase that catalyzes the formation of phosphodiester linkages between 5'-phosphoryl and 3'-hydroxyl groups in double-stranded DNA using NAD as a coenzyme and as the energy source for the reaction. It is essential for DNA replication and repair of damaged DNA. This is DNA ligase from Chlorobium luteolum (strain DSM 273 / BCRC 81028 / 2530) (Pelodictyon luteolum).